Reading from the N-terminus, the 691-residue chain is Methionine--tRNA ligase (691 aa).

The 'HIGH' region signature appears at 15–25 (PYTNGPIHIGH). The Zn(2+) site is built by C147, C150, C160, and C163. The short motif at 336–340 (KLSTS) is the 'KMSKS' region element. T339 is an ATP binding site. Residues 589 to 691 (DFTKMDLRVG…DGVKAGTTIN (103 aa)) form the tRNA-binding domain.

This sequence belongs to the class-I aminoacyl-tRNA synthetase family. MetG type 1 subfamily. As to quaternary structure, homodimer. Requires Zn(2+) as cofactor.

Its subcellular location is the cytoplasm. The enzyme catalyses tRNA(Met) + L-methionine + ATP = L-methionyl-tRNA(Met) + AMP + diphosphate. Is required not only for elongation of protein synthesis but also for the initiation of all mRNA translation through initiator tRNA(fMet) aminoacylation. The sequence is that of Methionine--tRNA ligase from Christiangramia forsetii (strain DSM 17595 / CGMCC 1.15422 / KT0803) (Gramella forsetii).